The chain runs to 215 residues: ATP phosphoribosyltransferase (215 aa).

It belongs to the ATP phosphoribosyltransferase family. Short subfamily. Heteromultimer composed of HisG and HisZ subunits.

The protein resides in the cytoplasm. The catalysed reaction is 1-(5-phospho-beta-D-ribosyl)-ATP + diphosphate = 5-phospho-alpha-D-ribose 1-diphosphate + ATP. Its pathway is amino-acid biosynthesis; L-histidine biosynthesis; L-histidine from 5-phospho-alpha-D-ribose 1-diphosphate: step 1/9. Its function is as follows. Catalyzes the condensation of ATP and 5-phosphoribose 1-diphosphate to form N'-(5'-phosphoribosyl)-ATP (PR-ATP). Has a crucial role in the pathway because the rate of histidine biosynthesis seems to be controlled primarily by regulation of HisG enzymatic activity. The sequence is that of ATP phosphoribosyltransferase from Cyanothece sp. (strain PCC 7425 / ATCC 29141).